Reading from the N-terminus, the 351-residue chain is Rhodopsin (351 aa).

At 1–36 (MNGTEGQDFYVPMSNKTGVVRSPFEYPQYYLAEPWK) the chain is on the extracellular side. Residues Asn2 and Asn15 are each glycosylated (N-linked (GlcNAc...) asparagine). The chain crosses the membrane as a helical span at residues 37–61 (FSALAAYMFMLILLGFPVNFLTLYV). Residues 62-73 (TIQHKKLRTPLN) lie on the Cytoplasmic side of the membrane. The helical transmembrane segment at 74–96 (YILLNLVVADLFMVFGGFTTTMY) threads the bilayer. At 97–110 (TSMNGYFVFGVTGC) the chain is on the extracellular side. A disulfide bond links Cys110 and Cys187. A helical transmembrane segment spans residues 111–133 (YIEGFFATLGGEIALWSLVVLAV). The 'Ionic lock' involved in activated form stabilization motif lies at 134-136 (ERY). Residues 134–152 (ERYVVVCKPMSNFRFGENH) are Cytoplasmic-facing. The chain crosses the membrane as a helical span at residues 153–173 (AIMGVAFSWIMAMACAAPPLF). The Extracellular segment spans residues 174-202 (GWSRYIPEGMQCSCGIDYYTLKPEINNES). Residues 203-224 (FVIYMFVVHFMIPLAVIFFCYG) traverse the membrane as a helical segment. Residues 225–252 (NLVCTVKEAAAQQQESATTQKAEKEVTR) lie on the Cytoplasmic side of the membrane. The chain crosses the membrane as a helical span at residues 253–274 (MVIIMVIAFLICWVPYASVAFY). Over 275 to 286 (IFTNQGSDFGPI) the chain is Extracellular. A helical membrane pass occupies residues 287 to 308 (FMTIPAFFAKSSAIYNPVIYIV). Lys296 carries the N6-(retinylidene)lysine modification. The Cytoplasmic segment spans residues 309 to 351 (MNKQFRNCMITTLCCGKNPLGDEDTSAGKTETSSVSTSQVSPA). S-palmitoyl cysteine attachment occurs at residues Cys322 and Cys323. Residues 331–351 (EDTSAGKTETSSVSTSQVSPA) are disordered. Positions 340–351 (TSSVSTSQVSPA) are enriched in low complexity. Residue Ser341 is modified to Phosphoserine; by RK and GRK7.

The protein belongs to the G-protein coupled receptor 1 family. Opsin subfamily. Post-translationally, contains one covalently linked retinal chromophore. Upon light absorption, the covalently bound 11-cis-retinal is converted to all-trans-retinal. After hydrolysis of the Schiff base and release of the covalently bound all-trans-retinal, active rhodopsin is regenerated by binding of a fresh molecule of 11-cis-retinal.

The protein localises to the membrane. It is found in the cell projection. Its subcellular location is the cilium. The protein resides in the photoreceptor outer segment. Functionally, photoreceptor required for image-forming vision at low light intensity. Required for photoreceptor cell viability after birth. Light-induced isomerization of 11-cis to all-trans retinal triggers a conformational change that activates signaling via G-proteins. Subsequent receptor phosphorylation mediates displacement of the bound G-protein alpha subunit by arrestin and terminates signaling. This Gallus gallus (Chicken) protein is Rhodopsin (RHO).